We begin with the raw amino-acid sequence, 604 residues long: Membrane protein insertase YidC (604 aa).

A helical transmembrane segment spans residues 8 to 28 (LYLAIGLSLLVLIGWNYFFAG). The segment at 42–84 (EQQAQTQTTSDTTARSDLNVPGQRSLPGESPQTQLSRPEALAA) is disordered. Positions 43 to 58 (QQAQTQTTSDTTARSD) are enriched in low complexity. Transmembrane regions (helical) follow at residues 349–369 (FDLLIDWGYFYFITRPMFWIL), 375–395 (VVGNFGVAILCITVLVKAVFF), 449–469 (LPMLIQIPVFFALYKVLFVTI), 507–527 (MIGHFLAIGIWPLIMGVSMFF), and 546–566 (WMPVIFTFMLGTFPSGLVIYW).

The protein belongs to the OXA1/ALB3/YidC family. Type 1 subfamily. As to quaternary structure, interacts with the Sec translocase complex via SecD. Specifically interacts with transmembrane segments of nascent integral membrane proteins during membrane integration.

It localises to the cell inner membrane. Required for the insertion and/or proper folding and/or complex formation of integral membrane proteins into the membrane. Involved in integration of membrane proteins that insert both dependently and independently of the Sec translocase complex, as well as at least some lipoproteins. Aids folding of multispanning membrane proteins. This Beijerinckia indica subsp. indica (strain ATCC 9039 / DSM 1715 / NCIMB 8712) protein is Membrane protein insertase YidC.